Reading from the N-terminus, the 529-residue chain is Arginine--tRNA ligase (529 aa).

Positions 113–123 match the 'HIGH' region motif; it reads ANPTGPLHIGH.

The protein belongs to the class-I aminoacyl-tRNA synthetase family. Monomer.

Its subcellular location is the cytoplasm. The enzyme catalyses tRNA(Arg) + L-arginine + ATP = L-arginyl-tRNA(Arg) + AMP + diphosphate. This chain is Arginine--tRNA ligase, found in Campylobacter curvus (strain 525.92).